The following is a 361-amino-acid chain: Cytochrome c peroxidase, mitochondrial (361 aa).

Residues 1–67 (MTTAVRLLPS…NWGKAAALAS (67 aa)) constitute a mitochondrion transit peptide. His-119 acts as the Proton acceptor in catalysis. Residue Tyr-220 is modified to Phosphotyrosine. His-242 is a heme b binding site. The active-site Tryptophan radical intermediate is Trp-258.

The protein belongs to the peroxidase family. Cytochrome c peroxidase subfamily. As to quaternary structure, forms a one-to-one complex with cytochrome c. Heme b is required as a cofactor. Post-translationally, CCP1 precursor is processed by the rhomboid protease PCP1, which cleaves the N-terminal hydrophobic transit peptide. The m-AAA protease (composed of YTA12/RCA1 and YTA10/AFG3) is required for CCP1 maturation: m-AAA protease promotes membrane dislocation of the CCP1 transmembrane segment within the transit peptide to ensure the correct positioning of CCP1 within the membrane bilayer, allowing intramembrane cleavage by PCP1.

The protein localises to the mitochondrion matrix. Its subcellular location is the mitochondrion intermembrane space. The enzyme catalyses 2 Fe(II)-[cytochrome c] + H2O2 + 2 H(+) = 2 Fe(III)-[cytochrome c] + 2 H2O. Destroys radicals which are normally produced within the cells and which are toxic to biological systems. The chain is Cytochrome c peroxidase, mitochondrial (CCP1) from Saccharomyces cerevisiae (strain ATCC 204508 / S288c) (Baker's yeast).